A 792-amino-acid chain; its full sequence is MSSSSIHTTEGSTPNTAGGMGKEPYSNVSGSQRSSDTLKQQKFIVSDAMAKNSRQLLFAHIYNYLVHNKFYSTASQFLKEVEVPLTTIENIGKIKENTVRDDSSQMRYDDIPENLLRPDMLLNASDTFLVEWWEIFRTLFDHVDGIPNESLDSNGNQEVFKQRIMAILPHNNPTVPPPFINGAENLVDPERHMNIARGSSVSQPSGVLRSPTQNELLNNSQDQRPPQFRSKSMMNGMPPGLSSMSTPNGVEGMQGNFERPTFQQSKSAALPTQRKSSIEEQANRNSSNFSGFGSQSPKNVNEDNEIDSKSAKGKLRSKSSKRGKVGKAAGTPKYNEVDEKHSTMQGSPFSPELLGSNNPVLQNQSKPSAQSQMNGSQWDPNFLMQQQRNPQQWQKLNGNNMQQDIPNSSHPSIGSNNPSNTSHRFNSRRKEQYDSKPEAIGNGSHRSSTSPSAGSVGNMSADYGDQNEYGSNKSSNFSGAFTNNNAMFQEMAKTMNLMMNQKSEEMNQWNKSNPYNMRPDNMPMSTMNWNNFPMPKGTSNSFNKDMLQAMQNKMMQSQSSSGMDPNLQQQYLMMMNMLMNFQSGNGFQSNPTNVYKSRGNDLDFAQPFSSENNLANDQSNIRSSYEAYQEDSKTPSTENGGRKMNMTPSLQSTNMISNGQMKHSTSRFSPTHGAPNQSELNKMESTQRGNDISHNYNPPNNRFVGNNLKSQNFSLASQDESVIAAAKKGRRKLTKLNKRNLATPESTSNTNYPESNKNGISTPNGSVGNKGKQTDINGHSNYPDNPFELFNI.

The span at 1–16 (MSSSSIHTTEGSTPNT) shows a compositional bias: polar residues. The disordered stretch occupies residues 1-34 (MSSSSIHTTEGSTPNTAGGMGKEPYSNVSGSQRS). In terms of domain architecture, LisH spans 53–85 (SRQLLFAHIYNYLVHNKFYSTASQFLKEVEVPL). A compositionally biased stretch (polar residues) spans 197–233 (RGSSVSQPSGVLRSPTQNELLNNSQDQRPPQFRSKSM). Disordered regions lie at residues 197 to 377 (RGSS…NGSQ), 397 to 477 (NGNN…SSNF), 624 to 707 (SYEA…VGNN), and 734 to 792 (TKLN…LFNI). Low complexity predominate over residues 285-294 (NSSNFSGFGS). Basic residues predominate over residues 311-325 (AKGKLRSKSSKRGKV). Composition is skewed to polar residues over residues 355 to 377 (GSNNPVLQNQSKPSAQSQMNGSQ) and 397 to 424 (NGNNMQQDIPNSSHPSIGSNNPSNTSHR). Residues 428–437 (RRKEQYDSKP) are compositionally biased toward basic and acidic residues. 5 stretches are compositionally biased toward polar residues: residues 444-458 (SHRSSTSPSAGSVGN), 468-477 (EYGSNKSSNF), 646-707 (MTPS…VGNN), 743-767 (TPESTSNTNYPESNKNGISTPNGSV), and 774-783 (TDINGHSNYP).

This sequence belongs to the MSS11 family.

It is found in the cytoplasm. The protein localises to the nucleus. Transcription factor that regulates pseudohyphal differentiation, invasive growth, floculation, adhesion and starch metabolism in response to nutrient availability. This chain is Transcription activator MSS11 (MSS11), found in Candida glabrata (strain ATCC 2001 / BCRC 20586 / JCM 3761 / NBRC 0622 / NRRL Y-65 / CBS 138) (Yeast).